Here is a 251-residue protein sequence, read N- to C-terminus: UDP-N-acetylglucosamine--dolichyl-phosphate N-acetylglucosaminyltransferase (251 aa).

The helical transmembrane segment at 150–167 threads the bilayer; the sequence is VGNLGLSFITFLLGGYYV.

It belongs to the glycosyltransferase 2 family.

It is found in the cell membrane. The catalysed reaction is a di-trans,poly-cis-dolichyl phosphate + UDP-N-acetyl-alpha-D-glucosamine = an N-acetyl-alpha-D-glucosaminyl-phospho-di-trans,poly-cis-dolichol + UDP. It functions in the pathway cell surface structure biogenesis; S-layer biogenesis. Its pathway is protein modification; protein glycosylation. Its function is as follows. Involved in the assembly of an N-linked disaccharide that decorates the S-layer glycoprotein and flagellins. AglK initiates N-linked glycosylation through the formation of alpha-linked dolichyl monophosphate N-acetylglucosamine. It catalyzes the transfer of GlcNAc from the donor substrate UDP-GlcNAc to dolichyl phosphate C55 (Dol-P) to yield Dol-P-GlcNAc. AglK reaction proceeds with retention of stereochemistry. The reaction is specific for UDP-GlcNAc. AglK shows a stronger preference for short dolichol (C55-60 Dol-P) substrates compared with the longer (C85-105 Dol-P). This Methanococcus voltae protein is UDP-N-acetylglucosamine--dolichyl-phosphate N-acetylglucosaminyltransferase.